The following is a 587-amino-acid chain: Urease subunit alpha (587 aa).

The region spanning 134–572 (GGIDTHVHFI…LPLAQRYLYT (439 aa)) is the Urease domain. Residues histidine 139, histidine 141, and lysine 222 each coordinate Ni(2+). Position 222 is an N6-carboxylysine (lysine 222). Position 224 (histidine 224) interacts with substrate. 2 residues coordinate Ni(2+): histidine 251 and histidine 277. The active-site Proton donor is the histidine 325. Aspartate 365 is a Ni(2+) binding site.

The protein belongs to the metallo-dependent hydrolases superfamily. Urease alpha subunit family. In terms of assembly, heterotrimer of UreA (gamma), UreB (beta) and UreC (alpha) subunits. Three heterotrimers associate to form the active enzyme. Requires Ni cation as cofactor. Post-translationally, carboxylation allows a single lysine to coordinate two nickel ions.

The protein localises to the cytoplasm. The enzyme catalyses urea + 2 H2O + H(+) = hydrogencarbonate + 2 NH4(+). It participates in nitrogen metabolism; urea degradation; CO(2) and NH(3) from urea (urease route): step 1/1. This is Urease subunit alpha from Clostridium perfringens.